An 883-amino-acid polypeptide reads, in one-letter code: Chromatin structure-remodeling complex protein RSC30 (883 aa).

The zn(2)-C6 fungal-type DNA-binding region spans 14-45; that stretch reads ACTQCRKRKIGCDRAKPICGNCVKYNKPDCFY. Disordered regions lie at residues 121–157 and 241–273; these read QNNNTNNNTAPRQNSSTVSSNVHGNTIVRSDSPDVPS and NTTANKINKTGENSKKGKVDGKRAGFDHQTSRT. A compositionally biased stretch (polar residues) spans 130 to 149; it reads APRQNSSTVSSNVHGNTIVR. Serine 150 carries the post-translational modification Phosphoserine. Residues 241 to 251 are compositionally biased toward polar residues; it reads NTTANKINKTG. Basic and acidic residues predominate over residues 252-270; sequence ENSKKGKVDGKRAGFDHQT.

In terms of assembly, forms a heteromer with RSC3. Interacts with NPL6. Component of the two forms of the RSC complex composed of at least either RSC1 or RSC2, and ARP7, ARP9, LDB7, NPL6, RSC3, RSC30, RSC4, RSC58, RSC6, RSC8, RSC9, SFH1, STH1, HTL1 and probably RTT102. The complexes interact with histone and histone variant components of centromeric chromatin. Component of a fungal-specific module (HTL1-LDB7-NPL6-RSC3-RSC30) within the RSC complex.

It is found in the nucleus. Component of the chromatin structure-remodeling complex (RSC), which is involved in transcription regulation and nucleosome positioning. RSC is responsible for the transfer of a histone octamer from a nucleosome core particle to naked DNA. The reaction requires ATP and involves an activated RSC-nucleosome intermediate. Remodeling reaction also involves DNA translocation, DNA twist and conformational change. As a reconfigurer of centromeric and flanking nucleosomes, RSC complex is required both for proper kinetochore function in chromosome segregation and, via a PKC1-dependent signaling pathway, for organization of the cellular cytoskeleton. This subunit is required for transcription of ribosomal protein genes and genes involved in the integrity of the cell wall. Together with HTL1, LDB7, NPL6, RSC3 components, defines a fungal-specific module within the RSC complex that plays a role in many cellular functions including the maintenance of cell wall integrity. This is Chromatin structure-remodeling complex protein RSC30 (RSC30) from Saccharomyces cerevisiae (strain ATCC 204508 / S288c) (Baker's yeast).